The following is a 212-amino-acid chain: ATP-dependent Clp protease proteolytic subunit 2 (212 aa).

Residues 1-20 (MSHNTSIASQGMPAMAGPET) form a disordered region. The Nucleophile role is filled by Ser-107. His-132 is a catalytic residue.

It belongs to the peptidase S14 family. In terms of assembly, fourteen ClpP subunits assemble into 2 heptameric rings which stack back to back to give a disk-like structure with a central cavity, resembling the structure of eukaryotic proteasomes.

It localises to the cytoplasm. The enzyme catalyses Hydrolysis of proteins to small peptides in the presence of ATP and magnesium. alpha-casein is the usual test substrate. In the absence of ATP, only oligopeptides shorter than five residues are hydrolyzed (such as succinyl-Leu-Tyr-|-NHMec, and Leu-Tyr-Leu-|-Tyr-Trp, in which cleavage of the -Tyr-|-Leu- and -Tyr-|-Trp bonds also occurs).. Functionally, cleaves peptides in various proteins in a process that requires ATP hydrolysis. Has a chymotrypsin-like activity. Plays a major role in the degradation of misfolded proteins. In Cutibacterium acnes (strain DSM 16379 / KPA171202) (Propionibacterium acnes), this protein is ATP-dependent Clp protease proteolytic subunit 2.